The primary structure comprises 196 residues: Peptide methionine sulfoxide reductase MsrA 2 (196 aa).

Residue cysteine 36 is part of the active site.

It belongs to the MsrA Met sulfoxide reductase family.

The catalysed reaction is L-methionyl-[protein] + [thioredoxin]-disulfide + H2O = L-methionyl-(S)-S-oxide-[protein] + [thioredoxin]-dithiol. The enzyme catalyses [thioredoxin]-disulfide + L-methionine + H2O = L-methionine (S)-S-oxide + [thioredoxin]-dithiol. Functionally, has an important function as a repair enzyme for proteins that have been inactivated by oxidation. Catalyzes the reversible oxidation-reduction of methionine sulfoxide in proteins to methionine. This Caulobacter vibrioides (strain ATCC 19089 / CIP 103742 / CB 15) (Caulobacter crescentus) protein is Peptide methionine sulfoxide reductase MsrA 2 (msrA2).